Reading from the N-terminus, the 247-residue chain is ATP synthase subunit a, chloroplastic (247 aa).

The next 5 membrane-spanning stretches (helical) occupy residues 38–58 (QVLI…IIAV), 95–115 (VPFI…GALL), 134–154 (INTT…AGLT), 199–219 (LVVV…VMFL), and 220–240 (GLFT…AYIG).

It belongs to the ATPase A chain family. In terms of assembly, F-type ATPases have 2 components, CF(1) - the catalytic core - and CF(0) - the membrane proton channel. CF(1) has five subunits: alpha(3), beta(3), gamma(1), delta(1), epsilon(1). CF(0) has four main subunits: a, b, b' and c.

It localises to the plastid. The protein localises to the chloroplast thylakoid membrane. Functionally, key component of the proton channel; it plays a direct role in the translocation of protons across the membrane. In Ranunculus macranthus (Large buttercup), this protein is ATP synthase subunit a, chloroplastic.